The sequence spans 438 residues: Histidinol dehydrogenase (438 aa).

NAD(+) is bound by residues tyrosine 129, glutamine 193, and asparagine 216. Substrate-binding residues include threonine 239, glutamine 261, and histidine 264. Zn(2+) contacts are provided by glutamine 261 and histidine 264. Residues glutamate 330 and histidine 331 each act as proton acceptor in the active site. Positions 331, 364, 418, and 423 each coordinate substrate. Aspartate 364 contacts Zn(2+). Histidine 423 is a Zn(2+) binding site.

The protein belongs to the histidinol dehydrogenase family. It depends on Zn(2+) as a cofactor.

It carries out the reaction L-histidinol + 2 NAD(+) + H2O = L-histidine + 2 NADH + 3 H(+). Its pathway is amino-acid biosynthesis; L-histidine biosynthesis; L-histidine from 5-phospho-alpha-D-ribose 1-diphosphate: step 9/9. In terms of biological role, catalyzes the sequential NAD-dependent oxidations of L-histidinol to L-histidinaldehyde and then to L-histidine. This Thermobifida fusca (strain YX) protein is Histidinol dehydrogenase.